Here is an 840-residue protein sequence, read N- to C-terminus: Kinesin-like protein KIN-14J (840 aa).

Residues 1 to 74 (MEADPAPSST…KGEEPVVSAE (74 aa)) are disordered. The Kinesin motor domain maps to 177–501 (NIRVFCRCRP…LNFASRVRAI (325 aa)). ATP is bound at residue 260–267 (GQTGTGKT). The stretch at 517-594 (KLKQMTEKIR…KKAARDTARS (78 aa)) forms a coiled coil. Residues 581-593 (LANEKKAARDTAR) show a composition bias toward basic and acidic residues. The tract at residues 581–617 (LANEKKAARDTARSTKPPLAPMRQRPPLGRIGNHIPP) is disordered.

The protein belongs to the TRAFAC class myosin-kinesin ATPase superfamily. Kinesin family. KIN-14 subfamily.

This chain is Kinesin-like protein KIN-14J, found in Oryza sativa subsp. japonica (Rice).